Here is a 60-residue protein sequence, read N- to C-terminus: MAQIKITLTKSPIGRIPAQRKTVVALGLGKLNSSVIKEDNAAIRGMVNAVSHLVTVEDVK.

It belongs to the universal ribosomal protein uL30 family. Part of the 50S ribosomal subunit.

The chain is Large ribosomal subunit protein uL30 from Streptococcus mutans serotype c (strain ATCC 700610 / UA159).